A 484-amino-acid polypeptide reads, in one-letter code: Glutamate--tRNA ligase (484 aa).

Residues 11 to 21 carry the 'HIGH' region motif; the sequence is PSPTGYLHIGN. The 'KMSKS' region signature appears at 252 to 256; that stretch reads KLSKR. An ATP-binding site is contributed by Lys-255.

This sequence belongs to the class-I aminoacyl-tRNA synthetase family. Glutamate--tRNA ligase type 1 subfamily. In terms of assembly, monomer.

The protein resides in the cytoplasm. It carries out the reaction tRNA(Glu) + L-glutamate + ATP = L-glutamyl-tRNA(Glu) + AMP + diphosphate. In terms of biological role, catalyzes the attachment of glutamate to tRNA(Glu) in a two-step reaction: glutamate is first activated by ATP to form Glu-AMP and then transferred to the acceptor end of tRNA(Glu). The sequence is that of Glutamate--tRNA ligase from Staphylococcus aureus (strain Mu3 / ATCC 700698).